Consider the following 76-residue polypeptide: ATP synthase subunit 9, mitochondrial (76 aa).

2 helical membrane-spanning segments follow: residues 14–34 (ISTI…AALI) and 48–68 (FPFA…CLMV).

The protein belongs to the ATPase C chain family. As to quaternary structure, F-type ATPases have 2 components, CF(1) - the catalytic core - and CF(0) - the membrane proton channel. CF(1) has five subunits: alpha(3), beta(3), gamma(1), delta(1), epsilon(1). CF(0) has three main subunits: a, b and c.

It localises to the mitochondrion membrane. In terms of biological role, mitochondrial membrane ATP synthase (F(1)F(0) ATP synthase or Complex V) produces ATP from ADP in the presence of a proton gradient across the membrane which is generated by electron transport complexes of the respiratory chain. F-type ATPases consist of two structural domains, F(1) - containing the extramembraneous catalytic core and F(0) - containing the membrane proton channel, linked together by a central stalk and a peripheral stalk. During catalysis, ATP synthesis in the catalytic domain of F(1) is coupled via a rotary mechanism of the central stalk subunits to proton translocation. Part of the complex F(0) domain. A homomeric c-ring of probably 10 subunits is part of the complex rotary element. The protein is ATP synthase subunit 9, mitochondrial (ATP9) of Cyberlindnera mrakii (Yeast).